Consider the following 581-residue polypeptide: Mitosis inhibitor protein kinase mik1 (581 aa).

Disordered stretches follow at residues 43–71 and 148–178; these read GHEE…HTPM and NLTN…PLSP. Polar residues predominate over residues 59–71; the sequence is KPSNTKRSPHTPM. A compositionally biased stretch (basic residues) spans 160–169; that stretch reads PCKKGTKIKL. One can recognise a Protein kinase domain in the interval 289–561; sequence FQQVKPIHES…LLAMPEMIFI (273 aa). ATP is bound by residues 295–303 and lysine 320; that span reads IHESDFSFV. Aspartate 417 (proton acceptor) is an active-site residue. The Mg(2+) site is built by asparagine 422 and aspartate 435.

The protein belongs to the protein kinase superfamily. Ser/Thr protein kinase family. WEE1 subfamily.

The enzyme catalyses L-seryl-[protein] + ATP = O-phospho-L-seryl-[protein] + ADP + H(+). It catalyses the reaction L-threonyl-[protein] + ATP = O-phospho-L-threonyl-[protein] + ADP + H(+). Functionally, protein kinase that acts both on serines and on tyrosines. It acts as a negative regulator of entry into mitosis (G2 to M transition). Phosphorylates and inhibits cdc2. This chain is Mitosis inhibitor protein kinase mik1 (mik1), found in Schizosaccharomyces pombe (strain 972 / ATCC 24843) (Fission yeast).